The chain runs to 252 residues: Short-chain dehydrogenase/reductase eriH (252 aa).

Isoleucine 16, aspartate 65, asparagine 92, lysine 125, tyrosine 158, lysine 162, valine 191, and threonine 193 together coordinate NADP(+). Catalysis depends on tyrosine 158, which acts as the Proton acceptor. The active-site Proton donor is tyrosine 158. The active-site Lowers pKa of active site Tyr is lysine 162.

It belongs to the short-chain dehydrogenases/reductases (SDR) family.

It carries out the reaction cyathadiol + reduced [NADPH--hemoprotein reductase] + O2 = cyathatriol + oxidized [NADPH--hemoprotein reductase] + H2O + H(+). It catalyses the reaction 11-O-acetylcyathatriol + A = 11-O-acetylcyathin A3 + AH2. The catalysed reaction is cyathatriol + A = cyathin A3 + AH2. It functions in the pathway secondary metabolite biosynthesis. Short-chain dehydrogenase/reductase; part of the gene cluster that mediates the biosynthesis of erinacines, cyathane-xylosides that show unique biological activities, including leishmanicidal activity, stimulating activity for nerve growth-factor synthesis, and agonistic activity toward the kappa opioid receptor. Within the pathway, eriH works with eriA to catalyze C-11 hydroxylation of cyathadiol to produce cyathatriol. EriH also catalyzes oxidation of 11-O-acetyl-cyathatriol into 1-O-acetylcyathin A3. In the absence of eriL and eriJ, the SDR eriH is able to convert cyathatriol to cyathin A3; this is likely a switching mechanism in the biosynthesis of cyathins (C-14 ketogroup)and erinacines (C-14 glycosylated group). The first step of the erinacines biosynthesis pathway is catalyzed by the geranylgeranyl diphosphate (GGPP) synthase eriE via conversion of farnesyl pyrophosphate and isopentyl pyrophosphate into geranylgeranyl pyrophosphate (GGPP). GGPP is then substrate of the diterpene cyclase eriG for the production of cyatha-3,12-diene. The cytochrome P450 monooxygenase eriI then hydroxylates cyatha-3,12-diene at C-14 of the seven-membered ring to produce erinacol, which is further hydroxylated at C-15 by the cytochrome P450 monooxygenase eriC to yield cyathadiol. The cytochrome P450 monooxygenase eriA then catalyzes C-11 hydroxylation in the presence of the short chain dehydrogenase/reductase (SDR) eriH, which leads to the production of cyathatriol. The acetyltransferase eriL converts cyathatriol into 11-O-acetyl-cyathatriol. The SDR eriH catalyzes further oxidation of 11-O-acetyl-cyathatriol into 1-O-acetylcyathin A3. Finally, the glycosyl transferase eriJ tranfers xylose from UDP-xylose onto C-14 of 11-O-acetyl-cyathatriol to form eracine Q. EriJ is also able to convert 11-O-acetyl-cyathatriol to eracine Q2 by using UDP-D-glucose as cosubstrate, but at a lower rate. The sequence is that of Short-chain dehydrogenase/reductase eriH from Hericium erinaceus (Lion's mane mushroom).